We begin with the raw amino-acid sequence, 109 residues long: uncharacterized protein (109 aa).

A run of 3 helical transmembrane segments spans residues 7–27 (IITI…PFFV), 37–57 (YIRY…VVYC), and 63–83 (ILTG…LGLH).

Belongs to the AzlD/HI_1737/HP1330 family.

Its subcellular location is the cell membrane. This is an uncharacterized protein from Haemophilus influenzae (strain ATCC 51907 / DSM 11121 / KW20 / Rd).